The following is a 517-amino-acid chain: Lysine--tRNA ligase (517 aa).

The interval methionine 1–alanine 21 is disordered. Over residues alanine 7–proline 20 the composition is skewed to low complexity. Mg(2+) is bound by residues glutamate 427 and glutamate 434.

This sequence belongs to the class-II aminoacyl-tRNA synthetase family. In terms of assembly, homodimer. The cofactor is Mg(2+).

It is found in the cytoplasm. The enzyme catalyses tRNA(Lys) + L-lysine + ATP = L-lysyl-tRNA(Lys) + AMP + diphosphate. This Cupriavidus taiwanensis (strain DSM 17343 / BCRC 17206 / CCUG 44338 / CIP 107171 / LMG 19424 / R1) (Ralstonia taiwanensis (strain LMG 19424)) protein is Lysine--tRNA ligase.